The primary structure comprises 283 residues: Tetraspanin-33 (283 aa).

The Cytoplasmic segment spans residues 1–24; sequence MARRPRAPAASGEEFSFVSPLVKY. Residues 25–45 traverse the membrane as a helical segment; it reads LLFFFNMLFWVISMVMVAVGV. Topologically, residues 46-64 are extracellular; it reads YARLMKHAEAALACLAVDP. A helical transmembrane segment spans residues 65 to 85; that stretch reads AILLIVVGVLMFLLTFCGCIG. The Cytoplasmic segment spans residues 86–96; sequence SLRENICLLQT. The chain crosses the membrane as a helical span at residues 97 to 117; the sequence is FSLCLTAVFLLQLAAGILGFV. Residues 118-235 are Extracellular-facing; that stretch reads FSDKARGKVS…DKLVNWIHSN (118 aa). 4 disulfide bridges follow: Cys-156–Cys-224, Cys-157–Cys-189, Cys-173–Cys-183, and Cys-190–Cys-203. A glycan (N-linked (GlcNAc...) asparagine) is linked at Asn-172. The chain crosses the membrane as a helical span at residues 236-256; the sequence is LFLLGGVALGLAIPQLVGILL. At 257–283 the chain is on the cytoplasmic side; it reads SQILVNQIKDQIKLQLYNQQHRADPWY.

Belongs to the tetraspanin (TM4SF) family. As to quaternary structure, homodimer; disulfide-linked. Interacts (via extracellular domain) with ADAM10 (via extracellular domain). Interacts (via cytoplasmic domain) with PLEKHA7 (via WW domains); the interaction is dependent on PDZD11 being bound to PLEKHA7 and facilitates the docking of ADAM10 to zonula adherens. Predominantly expressed in erythroblasts.

It is found in the cell membrane. The protein localises to the cell junction. It localises to the adherens junction. The protein resides in the cytoplasm. Part of TspanC8 subgroup, composed of 6 members that interact with the transmembrane metalloprotease ADAM10. This interaction is required for ADAM10 exit from the endoplasmic reticulum and for enzymatic maturation and trafficking to the cell surface as well as substrate specificity. Different TspanC8/ADAM10 complexes have distinct substrates. Plays an important role in normal erythropoiesis. It has a role in the differentiation of erythroid progenitors. Negatively regulates ligand-induced Notch activity probably by regulating ADAM10 activity. Mediates docking of ADAM10 to zonula adherens by interacting with ADAM10 and, in a PDZD11-dependent manner, with the zonula adherens protein PLEKHA7. In Homo sapiens (Human), this protein is Tetraspanin-33.